Consider the following 109-residue polypeptide: Thiosulfate sulfurtransferase GlpE (109 aa).

The Rhodanese domain occupies lysine 17–threonine 105. The active-site Cysteine persulfide intermediate is the cysteine 65.

This sequence belongs to the GlpE family.

It is found in the cytoplasm. It carries out the reaction thiosulfate + hydrogen cyanide = thiocyanate + sulfite + 2 H(+). The enzyme catalyses thiosulfate + [thioredoxin]-dithiol = [thioredoxin]-disulfide + hydrogen sulfide + sulfite + 2 H(+). In terms of biological role, transferase that catalyzes the transfer of sulfur from thiosulfate to thiophilic acceptors such as cyanide or dithiols. May function in a CysM-independent thiosulfate assimilation pathway by catalyzing the conversion of thiosulfate to sulfite, which can then be used for L-cysteine biosynthesis. In Yersinia pestis, this protein is Thiosulfate sulfurtransferase GlpE.